Reading from the N-terminus, the 284-residue chain is Acetyl-coenzyme A carboxylase carboxyl transferase subunit beta (284 aa).

Positions 31 to 284 (FWTYCKGCDS…LYQILAMHKK (254 aa)) constitute a CoA carboxyltransferase N-terminal domain. Zn(2+) contacts are provided by C35, C38, C54, and C57. A C4-type zinc finger spans residues 35 to 57 (CKGCDSHVFRKDIEENSFVCPKC).

The protein belongs to the AccD/PCCB family. In terms of assembly, acetyl-CoA carboxylase is a heterohexamer composed of biotin carboxyl carrier protein (AccB), biotin carboxylase (AccC) and two subunits each of ACCase subunit alpha (AccA) and ACCase subunit beta (AccD). Zn(2+) is required as a cofactor.

The protein resides in the cytoplasm. It carries out the reaction N(6)-carboxybiotinyl-L-lysyl-[protein] + acetyl-CoA = N(6)-biotinyl-L-lysyl-[protein] + malonyl-CoA. It participates in lipid metabolism; malonyl-CoA biosynthesis; malonyl-CoA from acetyl-CoA: step 1/1. Functionally, component of the acetyl coenzyme A carboxylase (ACC) complex. Biotin carboxylase (BC) catalyzes the carboxylation of biotin on its carrier protein (BCCP) and then the CO(2) group is transferred by the transcarboxylase to acetyl-CoA to form malonyl-CoA. This Clostridioides difficile (strain 630) (Peptoclostridium difficile) protein is Acetyl-coenzyme A carboxylase carboxyl transferase subunit beta.